Here is a 95-residue protein sequence, read N- to C-terminus: Exodeoxyribonuclease 7 small subunit (95 aa).

Residues glutamate 65–serine 95 form a disordered region.

This sequence belongs to the XseB family. As to quaternary structure, heterooligomer composed of large and small subunits.

The protein resides in the cytoplasm. It catalyses the reaction Exonucleolytic cleavage in either 5'- to 3'- or 3'- to 5'-direction to yield nucleoside 5'-phosphates.. In terms of biological role, bidirectionally degrades single-stranded DNA into large acid-insoluble oligonucleotides, which are then degraded further into small acid-soluble oligonucleotides. The chain is Exodeoxyribonuclease 7 small subunit from Chlorobaculum tepidum (strain ATCC 49652 / DSM 12025 / NBRC 103806 / TLS) (Chlorobium tepidum).